A 177-amino-acid chain; its full sequence is B-phycoerythrin beta chain (177 aa).

(2R,3E)-phycoerythrobilin-binding positions include K28, N35, D39, C50, D54, C61, N72, 77-78, C82, R129, 147-148, 154-158, and C158; these read RR, SQ, and PQGDC. An N4-methylasparagine modification is found at N72.

It belongs to the phycobiliprotein family. As to quaternary structure, heterotetramer of 2 different alpha chains and 2 identical beta chains. The subunit composition could comprise any combination of 2 out of 4 different alpha units with an invariant beta unit. Post-translationally, contains three covalently linked phycoerythrobilin chromophores.

It is found in the plastid. It localises to the chloroplast thylakoid membrane. Functionally, light-harvesting photosynthetic tetrapyrrole chromophore-protein from the phycobiliprotein complex. The polypeptide is B-phycoerythrin beta chain (cpeB) (Rhodomonas sp. (strain CS 24) (Chroomonas sp. (strain CS24))).